The following is an 81-amino-acid chain: ATP synthase subunit c (81 aa).

The next 2 membrane-spanning stretches (helical) occupy residues A6–F26 and L57–A77.

The protein belongs to the ATPase C chain family. As to quaternary structure, F-type ATPases have 2 components, F(1) - the catalytic core - and F(0) - the membrane proton channel. F(1) has five subunits: alpha(3), beta(3), gamma(1), delta(1), epsilon(1). F(0) has four main subunits: a(1), b(1), b'(1) and c(10-14). The alpha and beta chains form an alternating ring which encloses part of the gamma chain. F(1) is attached to F(0) by a central stalk formed by the gamma and epsilon chains, while a peripheral stalk is formed by the delta, b and b' chains.

Its subcellular location is the cellular thylakoid membrane. In terms of biological role, f(1)F(0) ATP synthase produces ATP from ADP in the presence of a proton or sodium gradient. F-type ATPases consist of two structural domains, F(1) containing the extramembraneous catalytic core and F(0) containing the membrane proton channel, linked together by a central stalk and a peripheral stalk. During catalysis, ATP synthesis in the catalytic domain of F(1) is coupled via a rotary mechanism of the central stalk subunits to proton translocation. Key component of the F(0) channel; it plays a direct role in translocation across the membrane. A homomeric c-ring of between 10-14 subunits forms the central stalk rotor element with the F(1) delta and epsilon subunits. The polypeptide is ATP synthase subunit c (Rippkaea orientalis (strain PCC 8801 / RF-1) (Cyanothece sp. (strain PCC 8801))).